The chain runs to 446 residues: Tubulin beta-2 chain (446 aa).

GTP contacts are provided by Gln11, Glu69, Ser138, Gly142, Thr143, Gly144, Asn204, and Asn226. Mg(2+) is bound at residue Glu69. A disordered region spans residues 426–446 (QEAGIDEEEEYEEEAPAEHEE). Positions 429–440 (GIDEEEEYEEEA) are enriched in acidic residues.

This sequence belongs to the tubulin family. Dimer of alpha and beta chains. A typical microtubule is a hollow water-filled tube with an outer diameter of 25 nm and an inner diameter of 15 nM. Alpha-beta heterodimers associate head-to-tail to form protofilaments running lengthwise along the microtubule wall with the beta-tubulin subunit facing the microtubule plus end conferring a structural polarity. Microtubules usually have 13 protofilaments but different protofilament numbers can be found in some organisms and specialized cells. Mg(2+) is required as a cofactor.

The protein localises to the cytoplasm. It is found in the cytoskeleton. In terms of biological role, tubulin is the major constituent of microtubules, a cylinder consisting of laterally associated linear protofilaments composed of alpha- and beta-tubulin heterodimers. Microtubules grow by the addition of GTP-tubulin dimers to the microtubule end, where a stabilizing cap forms. Below the cap, tubulin dimers are in GDP-bound state, owing to GTPase activity of alpha-tubulin. This is Tubulin beta-2 chain from Hypocrea virens (Gliocladium virens).